The chain runs to 126 residues: Profilin-1A (126 aa).

The segment at 2–36 (SWQTYVDTNLVGTGAVTQAAILGLDGNTWATSAGF) is actin binding. Position 104 is an N6,N6,N6-trimethyllysine (K104).

Belongs to the profilin family. Occurs in many kinds of cells as a complex with monomeric actin in a 1:1 ratio.

The protein resides in the cytoplasm. It localises to the cytoskeleton. Binds to actin and affects the structure of the cytoskeleton. At high concentrations, profilin prevents the polymerization of actin, whereas it enhances it at low concentrations. By binding to PIP2, it inhibits the formation of IP3 and DG. This is Profilin-1A from Acanthamoeba castellanii (Amoeba).